The chain runs to 610 residues: UvrABC system protein C (610 aa).

A GIY-YIG domain is found at Ser-16–Val-94. Residues Gln-204–Val-239 enclose the UVR domain.

It belongs to the UvrC family. In terms of assembly, interacts with UvrB in an incision complex.

It localises to the cytoplasm. The UvrABC repair system catalyzes the recognition and processing of DNA lesions. UvrC both incises the 5' and 3' sides of the lesion. The N-terminal half is responsible for the 3' incision and the C-terminal half is responsible for the 5' incision. This is UvrABC system protein C from Pectobacterium atrosepticum (strain SCRI 1043 / ATCC BAA-672) (Erwinia carotovora subsp. atroseptica).